A 334-amino-acid chain; its full sequence is Holliday junction branch migration complex subunit RuvB (334 aa).

Residues 4-184 (ADRLIQPQLQ…FGIPLRLEFY (181 aa)) form a large ATPase domain (RuvB-L) region. Residues Arg24, Gly65, Lys68, Thr69, Thr70, 131 to 133 (EDY), Arg174, Tyr184, and Arg221 contribute to the ATP site. Position 69 (Thr69) interacts with Mg(2+). The interval 185 to 255 (NVKDLSTIVT…VAELALNLLD (71 aa)) is small ATPAse domain (RuvB-S). The segment at 258 to 334 (GEGFDYMDRK…YVHFGMIKPE (77 aa)) is head domain (RuvB-H). Residues Arg294, Arg313, and Arg318 each contribute to the DNA site.

Belongs to the RuvB family. In terms of assembly, homohexamer. Forms an RuvA(8)-RuvB(12)-Holliday junction (HJ) complex. HJ DNA is sandwiched between 2 RuvA tetramers; dsDNA enters through RuvA and exits via RuvB. An RuvB hexamer assembles on each DNA strand where it exits the tetramer. Each RuvB hexamer is contacted by two RuvA subunits (via domain III) on 2 adjacent RuvB subunits; this complex drives branch migration. In the full resolvosome a probable DNA-RuvA(4)-RuvB(12)-RuvC(2) complex forms which resolves the HJ.

Its subcellular location is the cytoplasm. It carries out the reaction ATP + H2O = ADP + phosphate + H(+). In terms of biological role, the RuvA-RuvB-RuvC complex processes Holliday junction (HJ) DNA during genetic recombination and DNA repair, while the RuvA-RuvB complex plays an important role in the rescue of blocked DNA replication forks via replication fork reversal (RFR). RuvA specifically binds to HJ cruciform DNA, conferring on it an open structure. The RuvB hexamer acts as an ATP-dependent pump, pulling dsDNA into and through the RuvAB complex. RuvB forms 2 homohexamers on either side of HJ DNA bound by 1 or 2 RuvA tetramers; 4 subunits per hexamer contact DNA at a time. Coordinated motions by a converter formed by DNA-disengaged RuvB subunits stimulates ATP hydrolysis and nucleotide exchange. Immobilization of the converter enables RuvB to convert the ATP-contained energy into a lever motion, pulling 2 nucleotides of DNA out of the RuvA tetramer per ATP hydrolyzed, thus driving DNA branch migration. The RuvB motors rotate together with the DNA substrate, which together with the progressing nucleotide cycle form the mechanistic basis for DNA recombination by continuous HJ branch migration. Branch migration allows RuvC to scan DNA until it finds its consensus sequence, where it cleaves and resolves cruciform DNA. The protein is Holliday junction branch migration complex subunit RuvB of Shewanella oneidensis (strain ATCC 700550 / JCM 31522 / CIP 106686 / LMG 19005 / NCIMB 14063 / MR-1).